We begin with the raw amino-acid sequence, 112 residues long: cAMP-regulated phosphoprotein 19 (112 aa).

An N-acetylmethionine modification is found at Met1. Over residues 1-11 the composition is skewed to low complexity; it reads MSAEVPEAASA. Positions 1-49 are disordered; it reads MSAEVPEAASAEEQKEMEDKVTSPEKAEEAKLKARYPHLGQKPGGSDFL. Ser2 carries the post-translational modification N-acetylserine. Phosphoserine is present on residues Ser2 and Ser23. A compositionally biased stretch (basic and acidic residues) spans 12–32; the sequence is EEQKEMEDKVTSPEKAEEAKL. Phosphoserine; by GWL is present on residues Ser62 and Ser104. The interval 72–112 is disordered; the sequence is MKNKQLPTATPDKTEVTGDHIPTPQDLPQRKPSLVASKLAG. Ser104 carries the phosphoserine; by PKA modification. Lys109 carries the post-translational modification N6-acetyllysine.

As to quaternary structure, interacts (when phosphorylated at Ser-62) with PPP2R2D. Interacts with SNCA. Interacts with PPP2R2A; the interaction is direct and this interaction inhibits PP2A activity. Phosphorylation at Ser-62 by MASTL/GWL during mitosis is essential for interaction with PPP2R2D (PR55-delta) and subsequent inactivation of PP2A. Phosphorylated by PKA. Isoform ARPP-19 is found in all brain regions and also present in non-neuronal tissues. Isoform ARPP-16 is enriched in the caudate nucleus, found in low levels in cerebral cortex.

The protein localises to the cytoplasm. Functionally, protein phosphatase inhibitor that specifically inhibits protein phosphatase 2A (PP2A) during mitosis. Inhibition of PP2A is enhanced when ARPP19 is phosphorylated. When phosphorylated at Ser-62 during mitosis, specifically interacts with PPP2R2D (PR55-delta) and inhibits its activity, leading to inactivation of PP2A, an essential condition to keep cyclin-B1-CDK1 activity high during M phase. May indirectly enhance GAP-43 expression. The polypeptide is cAMP-regulated phosphoprotein 19 (ARPP19) (Bos taurus (Bovine)).